A 467-amino-acid chain; its full sequence is Methylenetetrahydrofolate--tRNA-(uracil-5-)-methyltransferase TrmFO (467 aa).

11–16 is a binding site for FAD; sequence GAGLAG.

The protein belongs to the MnmG family. TrmFO subfamily. FAD serves as cofactor.

The protein resides in the cytoplasm. The enzyme catalyses uridine(54) in tRNA + (6R)-5,10-methylene-5,6,7,8-tetrahydrofolate + NADH + H(+) = 5-methyluridine(54) in tRNA + (6S)-5,6,7,8-tetrahydrofolate + NAD(+). It carries out the reaction uridine(54) in tRNA + (6R)-5,10-methylene-5,6,7,8-tetrahydrofolate + NADPH + H(+) = 5-methyluridine(54) in tRNA + (6S)-5,6,7,8-tetrahydrofolate + NADP(+). Functionally, catalyzes the folate-dependent formation of 5-methyl-uridine at position 54 (M-5-U54) in all tRNAs. The polypeptide is Methylenetetrahydrofolate--tRNA-(uracil-5-)-methyltransferase TrmFO (Prochlorococcus marinus (strain NATL1A)).